Reading from the N-terminus, the 366-residue chain is Anhydro-N-acetylmuramic acid kinase (366 aa).

ATP is bound at residue Gly12–Asp19.

The protein belongs to the anhydro-N-acetylmuramic acid kinase family.

The enzyme catalyses 1,6-anhydro-N-acetyl-beta-muramate + ATP + H2O = N-acetyl-D-muramate 6-phosphate + ADP + H(+). Its pathway is amino-sugar metabolism; 1,6-anhydro-N-acetylmuramate degradation. It functions in the pathway cell wall biogenesis; peptidoglycan recycling. Its function is as follows. Catalyzes the specific phosphorylation of 1,6-anhydro-N-acetylmuramic acid (anhMurNAc) with the simultaneous cleavage of the 1,6-anhydro ring, generating MurNAc-6-P. Is required for the utilization of anhMurNAc either imported from the medium or derived from its own cell wall murein, and thus plays a role in cell wall recycling. The protein is Anhydro-N-acetylmuramic acid kinase of Neisseria meningitidis serogroup C (strain 053442).